The chain runs to 136 residues: MARTKQTARKTVGGDINSRISEKRAKSDNSKNIDLKKVHRYKPGTVALREIRKYQKSTNLLIRKLPFQRLVRELAQDYKSDLRFQNSAVLALQEASESYLVNLFEDTNLCAIHAKRVTIMPKDIYLARRIRGEMIF.

It belongs to the histone H3 family. The nucleosome is a histone octamer containing two molecules each of H2A, H2B, H3 and H4 assembled in one H3-H4 heterotetramer and two H2A-H2B heterodimers. The octamer wraps approximately 147 bp of DNA.

It localises to the nucleomorph. The protein resides in the chromosome. Functionally, core component of nucleosome. Nucleosomes wrap and compact DNA into chromatin, limiting DNA accessibility to the cellular machineries which require DNA as a template. Histones thereby play a central role in transcription regulation, DNA repair, DNA replication and chromosomal stability. DNA accessibility is regulated via a complex set of post-translational modifications of histones, also called histone code, and nucleosome remodeling. The protein is Histone H3 of Guillardia theta (Cryptophyte).